A 433-amino-acid chain; its full sequence is Glutamate-1-semialdehyde 2,1-aminomutase (433 aa).

Lysine 270 is modified (N6-(pyridoxal phosphate)lysine).

The protein belongs to the class-III pyridoxal-phosphate-dependent aminotransferase family. HemL subfamily. Homodimer. It depends on pyridoxal 5'-phosphate as a cofactor.

The protein resides in the cytoplasm. It carries out the reaction (S)-4-amino-5-oxopentanoate = 5-aminolevulinate. The protein operates within porphyrin-containing compound metabolism; protoporphyrin-IX biosynthesis; 5-aminolevulinate from L-glutamyl-tRNA(Glu): step 2/2. This Symbiobacterium thermophilum (strain DSM 24528 / JCM 14929 / IAM 14863 / T) protein is Glutamate-1-semialdehyde 2,1-aminomutase.